A 335-amino-acid chain; its full sequence is Glutaredoxin-3 (335 aa).

At Ala-2 the chain carries N-acetylalanine. The 116-residue stretch at 2–117 (AAGAAEAAVA…LTKKVQRHAS (116 aa)) folds into the Thioredoxin domain. A phosphoserine mark is found at Ser-117 and Ser-120. Glutaredoxin domains follow at residues 144–236 (APCM…PKLE) and 237–335 (ERLK…RGEN). The [2Fe-2S] cluster site is built by Cys-159 and Cys-261.

Homodimer; the homodimer is independent of 2Fe-2S clusters. Heterotrimer; forms a heterotrimeric complex composed by two BOLA2 molecules and one GLRX3 molecule; linked by [2Fe-2S] clusters. Interacts (via N-terminus) with PRKCQ/PKC-theta. Interacts (via C-terminus) with CSRP3. Interacts with CSRP2. In terms of tissue distribution, expressed in heart, spleen, testis and, to a lower extent, in thymus and peripheral blood leukocytes. Weakly expressed in lung, placenta, colon and small intestine.

The protein localises to the cytoplasm. The protein resides in the cytosol. It localises to the cell cortex. Its subcellular location is the myofibril. It is found in the sarcomere. The protein localises to the z line. Its function is as follows. Together with BOLA2, acts as a cytosolic iron-sulfur (Fe-S) cluster assembly factor that facilitates [2Fe-2S] cluster insertion into a subset of cytosolic proteins. Acts as a critical negative regulator of cardiac hypertrophy and a positive inotropic regulator. Required for hemoglobin maturation. Does not possess any thyoredoxin activity since it lacks the conserved motif that is essential for catalytic activity. The sequence is that of Glutaredoxin-3 (GLRX3) from Homo sapiens (Human).